Reading from the N-terminus, the 111-residue chain is UPF0321 protein P20C8.02c (111 aa).

An N-terminal signal peptide occupies residues 1-17; that stretch reads MLLLFCICCVFIKLVLA. An N-linked (GlcNAc...) asparagine glycan is attached at asparagine 20.

The protein belongs to the UPF0321 family.

The chain is UPF0321 protein P20C8.02c from Schizosaccharomyces pombe (strain 972 / ATCC 24843) (Fission yeast).